We begin with the raw amino-acid sequence, 1074 residues long: DNA-directed RNA polymerase subunit beta (1074 aa).

It belongs to the RNA polymerase beta chain family. In plastids the minimal PEP RNA polymerase catalytic core is composed of four subunits: alpha, beta, beta', and beta''. When a (nuclear-encoded) sigma factor is associated with the core the holoenzyme is formed, which can initiate transcription.

Its subcellular location is the plastid. It is found in the chloroplast. The catalysed reaction is RNA(n) + a ribonucleoside 5'-triphosphate = RNA(n+1) + diphosphate. In terms of biological role, DNA-dependent RNA polymerase catalyzes the transcription of DNA into RNA using the four ribonucleoside triphosphates as substrates. This Chara vulgaris (Common stonewort) protein is DNA-directed RNA polymerase subunit beta.